Here is a 1187-residue protein sequence, read N- to C-terminus: DENN domain and WD repeat-containing protein SCD1 (1187 aa).

Residues 19–179 (TVDGDLGFHG…NVPLPTPGKD (161 aa)) enclose the uDENN domain. The 132-residue stretch at 199–330 (SLPQADISLQ…EFSTLRNDIL (132 aa)) folds into the cDENN domain. The dDENN domain occupies 332–437 (LLHPNVVAID…ERRLSSDEKS (106 aa)). Disordered stretches follow at residues 508 to 536 (SGAL…SSME) and 765 to 793 (SAGL…GRSW). A compositionally biased stretch (basic and acidic residues) spans 526 to 536 (NTKEDNFSSME). A compositionally biased stretch (polar residues) spans 779-793 (SDETQQPSEASGRSW). 8 WD repeats span residues 841–892 (GHGG…SELR), 897–934 (GHTG…LLEE), 937–975 (GHDS…CVAT), 978–1017 (RCSS…QMHK), 1020–1057 (GHTK…CDAV), 1060–1099 (CHAG…IKCV), 1104–1141 (LHSS…GTKV), and 1152–1187 (RTAA…TINI).

As to quaternary structure, interacts with FLS2. As to expression, expressed in roots, rosette and cauline leaves, buds and flowers.

It localises to the cell membrane. Its subcellular location is the cytoplasmic vesicle. The protein resides in the clathrin-coated vesicle. Involved in growth and development through its role in cytokinesis and polarized cell expansion. Required for plasma membrane internalization. May function in clathrin-mediated membrane trafficking, including plasma membrane endocytosis, essential to both cytokinesis and cell expansion. Acts as a negative regulator of basal resistance against bacteria. This is DENN domain and WD repeat-containing protein SCD1 from Arabidopsis thaliana (Mouse-ear cress).